A 196-amino-acid chain; its full sequence is Peptidyl-tRNA hydrolase (196 aa).

Tyr18 is a binding site for tRNA. His23 functions as the Proton acceptor in the catalytic mechanism. TRNA-binding residues include Phe69, Asn71, and Asn117.

This sequence belongs to the PTH family. As to quaternary structure, monomer.

The protein localises to the cytoplasm. The enzyme catalyses an N-acyl-L-alpha-aminoacyl-tRNA + H2O = an N-acyl-L-amino acid + a tRNA + H(+). Its function is as follows. Hydrolyzes ribosome-free peptidyl-tRNAs (with 1 or more amino acids incorporated), which drop off the ribosome during protein synthesis, or as a result of ribosome stalling. In terms of biological role, catalyzes the release of premature peptidyl moieties from peptidyl-tRNA molecules trapped in stalled 50S ribosomal subunits, and thus maintains levels of free tRNAs and 50S ribosomes. In Vibrio parahaemolyticus serotype O3:K6 (strain RIMD 2210633), this protein is Peptidyl-tRNA hydrolase.